A 291-amino-acid chain; its full sequence is Phosphatidylglycerol--prolipoprotein diacylglyceryl transferase (291 aa).

A run of 4 helical transmembrane segments spans residues 24–44 (WYALAYIGGIMLGWLYARALL), 64–84 (FILWVTIAIIVGGRVGYVLFY), 100–120 (WNGGMSFHGGFMGCVAAVILF), and 125–145 (GLPILSLGDVATAVGPIGLFL). R147 contributes to the a 1,2-diacyl-sn-glycero-3-phospho-(1'-sn-glycerol) binding site. 3 helical membrane passes run 187–207 (AALEGILLFTILALMIRLGAL), 211–231 (GLVLGSFIALYAMARIVAEFF), and 247–267 (MGMLLSIPMVIIGLAIVYAAW).

It belongs to the Lgt family.

The protein resides in the cell inner membrane. The catalysed reaction is L-cysteinyl-[prolipoprotein] + a 1,2-diacyl-sn-glycero-3-phospho-(1'-sn-glycerol) = an S-1,2-diacyl-sn-glyceryl-L-cysteinyl-[prolipoprotein] + sn-glycerol 1-phosphate + H(+). Its pathway is protein modification; lipoprotein biosynthesis (diacylglyceryl transfer). Catalyzes the transfer of the diacylglyceryl group from phosphatidylglycerol to the sulfhydryl group of the N-terminal cysteine of a prolipoprotein, the first step in the formation of mature lipoproteins. The polypeptide is Phosphatidylglycerol--prolipoprotein diacylglyceryl transferase (Nitrobacter winogradskyi (strain ATCC 25391 / DSM 10237 / CIP 104748 / NCIMB 11846 / Nb-255)).